The primary structure comprises 537 residues: Trypsin-resistant surface T6 protein (537 aa).

A signal peptide spans 1-22 (MLACLAILAVVGLGMTRVSALS). The tract at residues 310–330 (GNTYDNLDKKPDKGNGITSKE) is hydrophilic. Positions 504–508 (LPSTG) match the LPXTG sorting signal motif. Thr507 carries the post-translational modification Pentaglycyl murein peptidoglycan amidated threonine. The propeptide at 508–537 (GSIGTYLFKAIGSAAMIGAIGIYIVKRRKA) is removed by sortase.

The protein resides in the secreted. Its subcellular location is the cell wall. In Streptococcus pyogenes serotype M6 (strain ATCC BAA-946 / MGAS10394), this protein is Trypsin-resistant surface T6 protein (tee6).